A 429-amino-acid polypeptide reads, in one-letter code: 3-phosphoshikimate 1-carboxyvinyltransferase (429 aa).

Lys-11, Ser-12, and Arg-16 together coordinate 3-phosphoshikimate. A phosphoenolpyruvate-binding site is contributed by Lys-11. Residues Gly-82 and Arg-110 each coordinate phosphoenolpyruvate. Residues Ser-155, Gln-157, Asp-302, and Lys-329 each coordinate 3-phosphoshikimate. A phosphoenolpyruvate-binding site is contributed by Gln-157. Residue Asp-302 is the Proton acceptor of the active site. Positions 333 and 385 each coordinate phosphoenolpyruvate.

This sequence belongs to the EPSP synthase family. Monomer.

The protein localises to the cytoplasm. The enzyme catalyses 3-phosphoshikimate + phosphoenolpyruvate = 5-O-(1-carboxyvinyl)-3-phosphoshikimate + phosphate. Its pathway is metabolic intermediate biosynthesis; chorismate biosynthesis; chorismate from D-erythrose 4-phosphate and phosphoenolpyruvate: step 6/7. Functionally, catalyzes the transfer of the enolpyruvyl moiety of phosphoenolpyruvate (PEP) to the 5-hydroxyl of shikimate-3-phosphate (S3P) to produce enolpyruvyl shikimate-3-phosphate and inorganic phosphate. The chain is 3-phosphoshikimate 1-carboxyvinyltransferase from Helicobacter pylori (strain P12).